The chain runs to 906 residues: Protein translocase subunit SecA (906 aa).

Residues Q87, 105-109, and D512 contribute to the ATP site; that span reads GEGKT. The segment at 875 to 897 is disordered; it reads VTFVRDEQKVGRNDPCPCGSGKK. Residues C890, C892, C901, and H902 each coordinate Zn(2+).

Belongs to the SecA family. In terms of assembly, monomer and homodimer. Part of the essential Sec protein translocation apparatus which comprises SecA, SecYEG and auxiliary proteins SecDF-YajC and YidC. It depends on Zn(2+) as a cofactor.

The protein resides in the cell inner membrane. The protein localises to the cytoplasm. It carries out the reaction ATP + H2O + cellular proteinSide 1 = ADP + phosphate + cellular proteinSide 2.. Its function is as follows. Part of the Sec protein translocase complex. Interacts with the SecYEG preprotein conducting channel. Has a central role in coupling the hydrolysis of ATP to the transfer of proteins into and across the cell membrane, serving both as a receptor for the preprotein-SecB complex and as an ATP-driven molecular motor driving the stepwise translocation of polypeptide chains across the membrane. The chain is Protein translocase subunit SecA from Aeromonas hydrophila subsp. hydrophila (strain ATCC 7966 / DSM 30187 / BCRC 13018 / CCUG 14551 / JCM 1027 / KCTC 2358 / NCIMB 9240 / NCTC 8049).